The chain runs to 177 residues: uncharacterized protein (177 aa).

It is found in the plastid. Its subcellular location is the chloroplast. This is an uncharacterized protein from Chlorella vulgaris (Green alga).